Reading from the N-terminus, the 248-residue chain is Phosphomannomutase (248 aa).

The Nucleophile role is filled by aspartate 14. Positions 14 and 16 each coordinate Mg(2+). The active-site Proton donor/acceptor is the aspartate 16. The alpha-D-mannose 1-phosphate site is built by arginine 23, arginine 125, arginine 136, arginine 143, serine 181, and aspartate 183. 3 residues coordinate Mg(2+): aspartate 209, phenylalanine 221, and threonine 226.

Belongs to the eukaryotic PMM family. In terms of assembly, homodimer. Requires Mg(2+) as cofactor.

Its subcellular location is the cytoplasm. The enzyme catalyses alpha-D-mannose 1-phosphate = D-mannose 6-phosphate. It functions in the pathway nucleotide-sugar biosynthesis; GDP-alpha-D-mannose biosynthesis; alpha-D-mannose 1-phosphate from D-fructose 6-phosphate: step 2/2. Its function is as follows. Catalyzes the interconversion of mannose-6-phosphate to mannose-1-phosphate, the precursor for the synthesis of GDP-mannose. GDP-mannose is an essential sugar nucleotide for the synthesis of D-mannose-containing cell wall polysaccharides (galactomannans and glucomannans), glycolipids, glycoproteins and the antioxidant L-ascorbate. The chain is Phosphomannomutase from Oryza sativa subsp. indica (Rice).